A 278-amino-acid polypeptide reads, in one-letter code: Probable endonuclease 4 (278 aa).

Residues histidine 66, histidine 106, glutamate 142, aspartate 176, histidine 179, histidine 213, aspartate 226, histidine 228, and glutamate 258 each contribute to the Zn(2+) site.

Belongs to the AP endonuclease 2 family. Zn(2+) serves as cofactor.

The enzyme catalyses Endonucleolytic cleavage to 5'-phosphooligonucleotide end-products.. Its function is as follows. Endonuclease IV plays a role in DNA repair. It cleaves phosphodiester bonds at apurinic or apyrimidinic (AP) sites, generating a 3'-hydroxyl group and a 5'-terminal sugar phosphate. This is Probable endonuclease 4 from Halothermothrix orenii (strain H 168 / OCM 544 / DSM 9562).